Here is a 200-residue protein sequence, read N- to C-terminus: Rho GDP-dissociation inhibitor 2 (200 aa).

The segment at 1 to 40 is disordered; the sequence is MTEKAPEPHVEEDDDELDGKLNYKPPPQKSLKELQEMDKD. The residue at position 2 (Thr-2) is an N-acetylthreonine. Lys-20 is modified (N6-acetyllysine). At Tyr-23 the chain carries Phosphotyrosine. Lys-24, Lys-39, Lys-46, Lys-101, and Lys-123 each carry N6-acetyllysine. Positions 30–40 are enriched in basic and acidic residues; the sequence is SLKELQEMDKD. Phosphoserine is present on Ser-144. Lys-174 carries the N6-acetyllysine modification.

The protein belongs to the Rho GDI family. As to quaternary structure, interacts with RHOA. Interacts with RAC1. Interacts with RAC2. Interacts with CDC42.

Its subcellular location is the cytoplasm. It localises to the cytosol. Its function is as follows. Regulates the GDP/GTP exchange reaction of the Rho proteins by inhibiting the dissociation of GDP from them, and the subsequent binding of GTP to them. Regulates reorganization of the actin cytoskeleton mediated by Rho family members. In Bos taurus (Bovine), this protein is Rho GDP-dissociation inhibitor 2 (ARHGDIB).